The sequence spans 38 residues: Defensin-like peptide 3 (38 aa).

Disulfide bonds link Cys-6–Cys-36 and Cys-13–Cys-29.

As to expression, produced by the crural gland and detected in venom from the spur located on each male hind leg.

The protein resides in the secreted. In terms of biological role, does not show antimicrobial, myotoxic, hemolytic and cell-promoting activities. The protein is Defensin-like peptide 3 of Ornithorhynchus anatinus (Duckbill platypus).